Here is a 648-residue protein sequence, read N- to C-terminus: Macrolide export ATP-binding/permease protein MacB (648 aa).

The 239-residue stretch at Leu-5–Thr-243 folds into the ABC transporter domain. Gly-41 to Ser-48 contributes to the ATP binding site. 4 helical membrane passes run Leu-273–Gly-293, Leu-523–Ile-543, Ala-576–Phe-596, and Leu-600–Cys-620.

This sequence belongs to the ABC transporter superfamily. Macrolide exporter (TC 3.A.1.122) family. Homodimer. Part of the tripartite efflux system MacAB-TolC, which is composed of an inner membrane transporter, MacB, a periplasmic membrane fusion protein, MacA, and an outer membrane component, TolC. The complex forms a large protein conduit and can translocate molecules across both the inner and outer membranes. Interacts with MacA.

It localises to the cell inner membrane. Part of the tripartite efflux system MacAB-TolC. MacB is a non-canonical ABC transporter that contains transmembrane domains (TMD), which form a pore in the inner membrane, and an ATP-binding domain (NBD), which is responsible for energy generation. Confers resistance against macrolides. The sequence is that of Macrolide export ATP-binding/permease protein MacB from Shigella flexneri.